Consider the following 67-residue polypeptide: Large ribosomal subunit protein bL35 (67 aa).

The segment covering 1 to 16 has biased composition (basic residues); sequence MPKMKTKKSAAKRFRV. The interval 1-22 is disordered; it reads MPKMKTKKSAAKRFRVRPGGTV.

It belongs to the bacterial ribosomal protein bL35 family.

The chain is Large ribosomal subunit protein bL35 from Methylibium petroleiphilum (strain ATCC BAA-1232 / LMG 22953 / PM1).